The chain runs to 72 residues: Hirudin variant-2 (72 aa).

Residues 1-7 (AICVSQA) form the signal peptide. The interaction with thrombin active site stretch occupies residues 8–10 (ITY). 3 cysteine pairs are disulfide-bonded: Cys13–Cys21, Cys23–Cys35, and Cys29–Cys46. Positions 47 to 72 (VTGEGTPNPESHNNGDFEEIPEEYLQ) are disordered. A glycan (O-linked (GalNAc...) threonine) is linked at Thr52. The interval 62 to 72 (DFEEIPEEYLQ) is interaction with fibrinogen-binding exosite of thrombin. The span at 62–72 (DFEEIPEEYLQ) shows a compositional bias: acidic residues. Sulfotyrosine is present on Tyr70.

This sequence belongs to the protease inhibitor I14 (hirudin) family.

The protein localises to the secreted. Its function is as follows. Hirudin is a potent thrombin-specific protease inhibitor. It forms a stable non-covalent complex with alpha-thrombin, thereby abolishing its ability to cleave fibrinogen. The polypeptide is Hirudin variant-2 (Hirudo medicinalis (Medicinal leech)).